Reading from the N-terminus, the 161-residue chain is Ferredoxin/F(420)H(2)-dependent CoB-CoM heterodisulfide reductase subunit C (161 aa).

4Fe-4S ferredoxin-type domains are found at residues Lys10–Arg40 and Ala51–Ile82. [4Fe-4S] cluster-binding residues include Cys19, Cys22, Cys25, Cys29, Cys62, Cys65, Cys68, and Cys72.

This sequence belongs to the HdrC family. As to quaternary structure, the ferredoxin/F(420)H(2)-dependent CoB-CoM heterodisulfide reductase is composed of three subunits; HdrA2, HdrB2 and HdrC2. The cofactor is [4Fe-4S] cluster.

Its subcellular location is the cytoplasm. It catalyses the reaction coenzyme B + coenzyme M + 2 oxidized [2Fe-2S]-[ferredoxin] = coenzyme M-coenzyme B heterodisulfide + 2 reduced [2Fe-2S]-[ferredoxin] + 2 H(+). The enzyme catalyses coenzyme B + 2 oxidized coenzyme F420-(gamma-L-Glu)(n) + coenzyme M + 2 reduced [2Fe-2S]-[ferredoxin] + 4 H(+) = coenzyme M-coenzyme B heterodisulfide + 2 reduced coenzyme F420-(gamma-L-Glu)(n) + 2 oxidized [2Fe-2S]-[ferredoxin]. The protein operates within cofactor metabolism; coenzyme M-coenzyme B heterodisulfide reduction; coenzyme B and coenzyme M from coenzyme M-coenzyme B heterodisulfide: step 1/1. Its function is as follows. Part of a complex that catalyzes the reversible reduction of CoM-S-S-CoB to the thiol-coenzymes H-S-CoM (coenzyme M) and H-S-CoB (coenzyme B). Catalyzes the transfer of electrons from ferredoxin to CoM-S-S-CoB during methanogenesis from acetate. Electrons transfer from ferredoxin to CoM-S-S-CoB via HdrA2, HdrC2 and HdrB2. In addition, the complex can use electron bifurcation to direct electron pairs from reduced coenzyme F420 towards the reduction of both ferredoxin and CoB-CoM heterodisulfide. This activity may take place during Fe(III)-dependent anaerobic methane oxidation. This is Ferredoxin/F(420)H(2)-dependent CoB-CoM heterodisulfide reductase subunit C from Methanosarcina acetivorans (strain ATCC 35395 / DSM 2834 / JCM 12185 / C2A).